A 500-amino-acid chain; its full sequence is Probable 26S proteasome non-ATPase regulatory subunit 3 (500 aa).

In terms of domain architecture, PCI spans 253 to 432 (ARFLYYLGRI…GYMRTKESTD (180 aa)). The tract at residues 462–484 (RYPPKSYGKELESAEERREREQQ) is disordered. The span at 468–484 (YGKELESAEERREREQQ) shows a compositional bias: basic and acidic residues.

The protein belongs to the proteasome subunit S3 family. As to quaternary structure, the 26S proteasome is composed of a core protease, known as the 20S proteasome, capped at one or both ends by the 19S regulatory complex (RC). The RC is composed of at least 18 different subunits in two subcomplexes, the base and the lid, which form the portions proximal and distal to the 20S proteolytic core, respectively.

Acts as a regulatory subunit of the 26 proteasome which is involved in the ATP-dependent degradation of ubiquitinated proteins. The protein is Probable 26S proteasome non-ATPase regulatory subunit 3 (DOXA2) of Anopheles stephensi (Indo-Pakistan malaria mosquito).